The sequence spans 948 residues: UvrABC system protein A (948 aa).

33-40 (GLSGSGKS) serves as a coordination point for ATP. The C4-type zinc-finger motif lies at 252–279 (CPICGFSIGELEPRMFSFNSPFGACPTC). ABC transporter domains are found at residues 309–587 (WIPT…KKSL) and 607–935 (ASDR…KYLK). 639–646 (GVSGSGKS) serves as a coordination point for ATP. The C4-type zinc finger occupies 738 to 764 (CEACKGDGIIKIEMHFLPDVYVPCEVC).

It belongs to the ABC transporter superfamily. UvrA family. In terms of assembly, forms a heterotetramer with UvrB during the search for lesions.

It localises to the cytoplasm. Functionally, the UvrABC repair system catalyzes the recognition and processing of DNA lesions. UvrA is an ATPase and a DNA-binding protein. A damage recognition complex composed of 2 UvrA and 2 UvrB subunits scans DNA for abnormalities. When the presence of a lesion has been verified by UvrB, the UvrA molecules dissociate. This Staphylococcus aureus (strain MRSA252) protein is UvrABC system protein A.